The chain runs to 133 residues: Membrane protein FAM174B (133 aa).

A signal peptide spans 1–19; that stretch reads MWLYTFAVALIVIAQEING. Residues 20–67 are Extracellular-facing; it reads EPHTRPSSATPLNATLPPQEEGSAQNTTDAAVGSRLSTILRDLPTIKN. Positions 22–47 are disordered; sequence HTRPSSATPLNATLPPQEEGSAQNTT. N-linked (GlcNAc...) asparagine glycans are attached at residues Asn32, Asn45, and Asn67. A helical transmembrane segment spans residues 68–88; that stretch reads ISIFICVLTTLLITCLVIKIC. Over 89–133 the chain is Cytoplasmic; that stretch reads RSARKIRKTRKYDIITTPAERVEMAPLNEENDEEDDSTLFDVKYR. A disordered region spans residues 113-133; the sequence is APLNEENDEEDDSTLFDVKYR. Residues 117-126 show a composition bias toward acidic residues; it reads EENDEEDDST.

This sequence belongs to the FAM174 family.

The protein resides in the cell membrane. Its subcellular location is the golgi apparatus. Its function is as follows. Essential for Golgi structural integrity. This Danio rerio (Zebrafish) protein is Membrane protein FAM174B (Fam174b).